We begin with the raw amino-acid sequence, 109 residues long: Flagellar hook-basal body complex protein FliE (109 aa).

The protein belongs to the FliE family.

The protein localises to the bacterial flagellum basal body. The protein is Flagellar hook-basal body complex protein FliE of Pseudomonas fluorescens (strain Pf0-1).